The sequence spans 638 residues: Zinc finger protein 143 (638 aa).

Met-1 is subject to N-acetylmethionine. A Glycyl lysine isopeptide (Lys-Gly) (interchain with G-Cter in SUMO2) cross-link involves residue Lys-213. 4 C2H2-type zinc fingers span residues 237-261 (FRCK…ERSH), 267-291 (YQCE…FRTH), 297-321 (YRCS…IRTH), and 327-351 (FKCP…IRTH). Phosphothreonine is present on Thr-352. C2H2-type zinc fingers lie at residues 357 to 381 (YYCT…VRIH), 387 to 411 (YVCT…HVVH), and 417 to 440 (YNCN…RTAH). Residue Lys-406 forms a Glycyl lysine isopeptide (Lys-Gly) (interchain with G-Cter in SUMO2) linkage.

Belongs to the GLI C2H2-type zinc-finger protein family. Interacts with CHD8. Forms a complex with HCFC1 and ZNF143.

Its subcellular location is the nucleus. In terms of biological role, transcriptional activator. Activates the gene for selenocysteine tRNA (tRNAsec). Binds to the SPH motif of small nuclear RNA (snRNA) gene promoters. Participates in efficient U6 RNA polymerase III transcription via its interaction with CHD8. In complex with HCFC1 and ZNF143, regulates the expression of several genes, including AP2S1, ESCO2, OPHN1, RBL1, UBXN8 and ZNF32. In Mus musculus (Mouse), this protein is Zinc finger protein 143 (Znf143).